A 238-amino-acid chain; its full sequence is MEGSKSEAVFDSMNLNPQIFINEAINSVEDYVDQAFDFYARDASKSLKIKGSDKQKSQALSNGIARVRGLLLSVIDNRLKLWESYSLRFCFAVPDGFVLPKSEESSSVHQDGLYDLELDAELDSLRDKLNVVGKRSVELDSELQALERSSVSRERSLRLVNEALELYDESSMDEIFKEMTKMASELRASVERLKTRRMKASESAKVKRLKNHGKEFSAMTFDGKLEDLEKFQAELRKM.

Positions Glu117–Ser149 form a coiled coil.

The protein belongs to the mis12 family.

The protein resides in the chromosome. It is found in the centromere. Its subcellular location is the kinetochore. In terms of biological role, constitutive component of kinetochores that is essential for proper cell division during mitotic cell cycle. May play a role in the modulation of centromere during meiosis. This Arabidopsis thaliana (Mouse-ear cress) protein is Protein MIS12 homolog.